The chain runs to 139 residues: Oocyte zinc finger protein XlCOF14 (139 aa).

5 consecutive C2H2-type zinc fingers follow at residues 6–28 (FICS…SNVH), 33–55 (FPCT…QKIH), 61–83 (HKCT…HLSH), 89–111 (FSCF…QLSH), and 117–139 (FVCS…CHIH).

Belongs to the krueppel C2H2-type zinc-finger protein family.

The protein resides in the nucleus. May be involved in transcriptional regulation. The sequence is that of Oocyte zinc finger protein XlCOF14 from Xenopus laevis (African clawed frog).